We begin with the raw amino-acid sequence, 453 residues long: Allantoinase (453 aa).

Zn(2+)-binding residues include His-59, His-61, Lys-146, His-186, His-242, and Asp-315. Lys-146 is modified (N6-carboxylysine).

Belongs to the metallo-dependent hydrolases superfamily. Allantoinase family. Homotetramer. Zn(2+) serves as cofactor. Post-translationally, carboxylation allows a single lysine to coordinate two zinc ions.

The enzyme catalyses (S)-allantoin + H2O = allantoate + H(+). Its pathway is nitrogen metabolism; (S)-allantoin degradation; allantoate from (S)-allantoin: step 1/1. Functionally, catalyzes the conversion of allantoin (5-ureidohydantoin) to allantoic acid by hydrolytic cleavage of the five-member hydantoin ring. In Escherichia coli O9:H4 (strain HS), this protein is Allantoinase.